The chain runs to 801 residues: N,N'-diacetylchitobiose phosphorylase (801 aa).

Residues R333, R343, R349, D350, W490, and D492 each contribute to the N-acetyl-alpha-D-glucosamine 1-phosphate site. The active-site Proton donor is D492. Residues D492, K636, and E637 each coordinate N-acetyl-D-glucosamine. N-acetyl-alpha-D-glucosamine 1-phosphate contacts are provided by E637, H644, Q690, T709, and G710.

The protein belongs to the glycosyl hydrolase 94 family. Homodimer.

The catalysed reaction is N,N'-diacetylchitobiose + phosphate = N-acetyl-alpha-D-glucosamine 1-phosphate + N-acetyl-D-glucosamine. Its function is as follows. Catalyzes the reversible phosphorolysis of chitobiose (N,N'-diacetylchitobiose or (GlcNAc)(2)) into N-acetyl-alpha-D-glucosamine 1-phosphate (GlcNAc-1-P) and N-acetyl-D-glucosamine (GlcNAc) with inversion of the anomeric configuration. In the synthetic reaction, is also active on glucose-1-phosphate with 10% activity as compared with that on GlcNAc-1-P. GlcNAc is the best acceptor substrate, but the enzyme can use aryl-beta-glycosides of GlcNAc as the acceptor substrate with 10-20% activities of GlcNAc. Shows no phosphorolytic activity on cellobiose. The chain is N,N'-diacetylchitobiose phosphorylase from Vibrio proteolyticus (Aeromonas proteolytica).